The following is a 205-amino-acid chain: Protein Nef (205 aa).

G2 carries the N-myristoyl glycine; by host lipid modification. Phosphoserine; by host is present on S6. The segment at 62–65 (EEGD) is acidic; interacts with host PACS1 and PACS2; stabilizes the interaction of NEF/MHC-I with host AP1M1; necessary for MHC-I internalization. Residues 69–78 (PVRPQVPLRP) form an SH3-binding; interaction with Src family tyrosine kinases region. A PxxP; stabilizes the interaction of NEF/MHC-I with host AP1M1; necessary for MHC-I internalization motif is present at residues 72–75 (PQVP). The interval 108–124 (EILDLWVYHTQGFFPDW) is mediates dimerization, Nef-PTE1 interaction. A binding to ATP6V1H region spans residues 148–180 (VDPAEVEEATGGENNSLLHPICQHGVDDEEKEV). The Dileucine internalization motif; necessary for CD4 internalization motif lies at 164–165 (LL). The Diacidic; necessary for CD4 internalization motif lies at 174–175 (DD).

Belongs to the lentivirus primate group Nef protein family. Monomer; cytosolic form. Homodimer; membrane bound form. Interacts with Nef associated p21-activated kinase (PAK2); this interaction activates PAK2. Associates with the Nef-MHC-I-AP1 complex; this complex is required for MHC-I internalization. Interacts (via C-terminus) with host PI3-kinase. Interacts with host PACS1; this interaction seems to be weak. Interacts with host PACS2. Interacts with host LCK and MAPK3; these interactions inhibit the kinase activity of the latter. Interacts with host ATP6V1H; this interaction may play a role in CD4 endocytosis. Associates with the CD4-Nef-AP2 complex; this complex is required for CD4 internalization. Interacts with host AP2 subunit alpha and AP2 subunit sigma2. Interacts with TCR-zeta chain; this interaction up-regulates the Fas ligand (FasL) surface expression. Interacts with host HCK, LYN, and SRC; these interactions activate the Src family kinases. Interacts with MAP3K5; this interaction inhibits the Fas and TNFR-mediated death signals. Interacts with beta-COP and PTE1. Interacts with human RACK1; this increases Nef phosphorylation by PKC. Interacts with TP53; this interaction decreases the half-life of TP53, protecting the infected cell against p53-mediated apoptosis. Post-translationally, the virion-associated Nef proteins are cleaved by the viral protease to release the soluble C-terminal core protein. Nef is probably cleaved concomitantly with viral structural proteins on maturation of virus particles. Myristoylated. In terms of processing, phosphorylated on serine residues, probably by host PKCdelta and theta.

Its subcellular location is the host cell membrane. It is found in the virion. It localises to the secreted. The protein resides in the host Golgi apparatus membrane. Factor of infectivity and pathogenicity, required for optimal virus replication. Alters numerous pathways of T-lymphocyte function and down-regulates immunity surface molecules in order to evade host defense and increase viral infectivity. Alters the functionality of other immunity cells, like dendritic cells, monocytes/macrophages and NK cells. Functionally, in infected CD4(+) T-lymphocytes, down-regulates the surface MHC-I, mature MHC-II, CD4, CD28, CCR5 and CXCR4 molecules. Mediates internalization and degradation of host CD4 through the interaction of with the cytoplasmic tail of CD4, the recruitment of AP-2 (clathrin adapter protein complex 2), internalization through clathrin coated pits, and subsequent transport to endosomes and lysosomes for degradation. Diverts host MHC-I molecules to the trans-Golgi network-associated endosomal compartments by an endocytic pathway to finally target them for degradation. MHC-I down-regulation may involve AP-1 (clathrin adapter protein complex 1) or possibly Src family kinase-ZAP70/Syk-PI3K cascade recruited by PACS2. In consequence infected cells are masked for immune recognition by cytotoxic T-lymphocytes. Decreasing the number of immune receptors also prevents reinfection by more HIV particles (superinfection). Down-regulates host SERINC3 and SERINC5 thereby excluding these proteins from the viral particles. Virion infectivity is drastically higher when SERINC3 or SERINC5 are excluded from the viral envelope, because these host antiviral proteins impair the membrane fusion event necessary for subsequent virion penetration. In terms of biological role, bypasses host T-cell signaling by inducing a transcriptional program nearly identical to that of anti-CD3 cell activation. Interaction with TCR-zeta chain up-regulates the Fas ligand (FasL). Increasing surface FasL molecules and decreasing surface MHC-I molecules on infected CD4(+) cells send attacking cytotoxic CD8+ T-lymphocytes into apoptosis. Its function is as follows. Plays a role in optimizing the host cell environment for viral replication without causing cell death by apoptosis. Protects the infected cells from apoptosis in order to keep them alive until the next virus generation is ready to strike. Inhibits the Fas and TNFR-mediated death signals by blocking MAP3K5/ASK1. Decreases the half-life of TP53, protecting the infected cell against p53-mediated apoptosis. Inhibits the apoptotic signals regulated by the Bcl-2 family proteins through the formation of a Nef/PI3-kinase/PAK2 complex that leads to activation of PAK2 and induces phosphorylation of host BAD. Extracellular Nef protein targets CD4(+) T-lymphocytes for apoptosis by interacting with CXCR4 surface receptors. The sequence is that of Protein Nef from Human immunodeficiency virus type 1 group M subtype A (isolate U455) (HIV-1).